The sequence spans 274 residues: Type III pantothenate kinase (274 aa).

An ATP-binding site is contributed by 6 to 13; it reads DVRNTHTV. A substrate-binding site is contributed by 109–112; the sequence is GADR. Asp-111 acts as the Proton acceptor in catalysis. Asp-131 is a binding site for K(+). Residue Ser-134 participates in ATP binding. Thr-186 is a substrate binding site.

The protein belongs to the type III pantothenate kinase family. As to quaternary structure, homodimer. The cofactor is NH4(+). K(+) is required as a cofactor.

The protein resides in the cytoplasm. The enzyme catalyses (R)-pantothenate + ATP = (R)-4'-phosphopantothenate + ADP + H(+). It functions in the pathway cofactor biosynthesis; coenzyme A biosynthesis; CoA from (R)-pantothenate: step 1/5. In terms of biological role, catalyzes the phosphorylation of pantothenate (Pan), the first step in CoA biosynthesis. The protein is Type III pantothenate kinase of Mycobacterium leprae (strain Br4923).